We begin with the raw amino-acid sequence, 489 residues long: Cytochrome P450 71A26 (489 aa).

Residues 1 to 21 (MMIMFFLLCSIIFVVTIIIFR) traverse the membrane as a helical segment. Cys431 is a binding site for heme.

This sequence belongs to the cytochrome P450 family. It depends on heme as a cofactor.

Its subcellular location is the membrane. This Arabidopsis thaliana (Mouse-ear cress) protein is Cytochrome P450 71A26 (CYP71A26).